Consider the following 494-residue polypeptide: ATP synthase subunit beta, plastid (494 aa).

Glycine 169 to threonine 176 serves as a coordination point for ATP.

Belongs to the ATPase alpha/beta chains family. As to quaternary structure, F-type ATPases have 2 components, CF(1) - the catalytic core - and CF(0) - the membrane proton channel. CF(1) has five subunits: alpha(3), beta(3), gamma(1), delta(1), epsilon(1). CF(0) has four main subunits: a(1), b(1), b'(1) and c(9-12).

The protein resides in the plastid membrane. The enzyme catalyses ATP + H2O + 4 H(+)(in) = ADP + phosphate + 5 H(+)(out). Functionally, produces ATP from ADP in the presence of a proton gradient across the membrane. The catalytic sites are hosted primarily by the beta subunits. In Cuscuta sandwichiana (Kauna'oa), this protein is ATP synthase subunit beta, plastid (atpB).